We begin with the raw amino-acid sequence, 373 residues long: S-adenosylmethionine:tRNA ribosyltransferase-isomerase (373 aa).

Belongs to the QueA family. In terms of assembly, monomer.

The protein resides in the cytoplasm. It carries out the reaction 7-aminomethyl-7-carbaguanosine(34) in tRNA + S-adenosyl-L-methionine = epoxyqueuosine(34) in tRNA + adenine + L-methionine + 2 H(+). It functions in the pathway tRNA modification; tRNA-queuosine biosynthesis. Transfers and isomerizes the ribose moiety from AdoMet to the 7-aminomethyl group of 7-deazaguanine (preQ1-tRNA) to give epoxyqueuosine (oQ-tRNA). This Caulobacter sp. (strain K31) protein is S-adenosylmethionine:tRNA ribosyltransferase-isomerase.